The primary structure comprises 87 residues: Prohibitin 1 (87 aa).

Position 8 is a phosphothreonine (Thr8). Residue Lys62 is modified to N6-acetyllysine. Tyr83 is subject to Phosphotyrosine.

Belongs to the prohibitin family. The mitochondrial prohibitin complex consists of two subunits (PHB1 and PHB2), assembled into a membrane-associated ring-shaped supercomplex of approximately 1 mDa. Interacts with STOML2. Interacts with MAP1LC3B (membrane-bound form LC3-II); the interaction requires PHB2 and takes place upon Parkin-mediated mitochondrial damage. Interacts with STAT3 (unphosphorylated or phosphorylated at 'Ser-727'). Interacts with CLPB. Interacts with CD86 (via cytoplasmic domain); the interactions increases after priming with CD40.

It is found in the mitochondrion inner membrane. The protein resides in the nucleus. Its subcellular location is the cytoplasm. The protein localises to the cell membrane. Functionally, protein with pleiotropic attributes mediated in a cell-compartment- and tissue-specific manner, which include the plasma membrane-associated cell signaling functions, mitochondrial chaperone, and transcriptional co-regulator of transcription factors in the nucleus. Plays a role in adipose tissue and glucose homeostasis in a sex-specific manner. Contributes to pulmonary vascular remodeling by accelerating proliferation of pulmonary arterial smooth muscle cells. In terms of biological role, in the mitochondria, together with PHB2, forms large ring complexes (prohibitin complexes) in the inner mitochondrial membrane (IMM) and functions as a chaperone protein that stabilizes mitochondrial respiratory enzymes and maintains mitochondrial integrity in the IMM, which is required for mitochondrial morphogenesis, neuronal survival, and normal lifespan. The prohibitin complex, with DNAJC19, regulates cardiolipin remodeling and the protein turnover of OMA1 in a cardiolipin-binding manner. Regulates mitochondrial respiration activity playing a role in cellular aging. The prohibitin complex plays a role of mitophagy receptor involved in targeting mitochondria for autophagic degradation. Involved in mitochondrial-mediated antiviral innate immunity, activates RIG-I-mediated signal transduction and production of IFNB1 and proinflammatory cytokine IL6. Its function is as follows. In the nucleus, acts as a transcription coregulator, enhances promoter binding by TP53, a transcription factor it activates, but reduces the promoter binding by E2F1, a transcription factor it represses. Interacts with STAT3 to affect IL17 secretion in T-helper Th17 cells. In the plasma membrane, cooperates with CD86 to mediate CD86-signaling in B lymphocytes that regulates the level of IgG1 produced through the activation of distal signaling intermediates. Upon CD40 engagement, required to activate NF-kappa-B signaling pathway via phospholipase C and protein kinase C activation. This Mesocricetus auratus (Golden hamster) protein is Prohibitin 1 (PHB1).